Reading from the N-terminus, the 201-residue chain is Recombination protein RecR (201 aa).

Residues 59–74 (CSRCQNFCEAELCSIC) form a C4-type zinc finger. The region spanning 82–177 (RVLCVVESPT…PVSRIAHGIP (96 aa)) is the Toprim domain.

It belongs to the RecR family.

Functionally, may play a role in DNA repair. It seems to be involved in an RecBC-independent recombinational process of DNA repair. It may act with RecF and RecO. This chain is Recombination protein RecR, found in Hahella chejuensis (strain KCTC 2396).